The following is a 562-amino-acid chain: NAD-dependent malic enzyme (562 aa).

Catalysis depends on tyrosine 101, which acts as the Proton donor. NAD(+) is bound at residue arginine 154. Lysine 172 acts as the Proton acceptor in catalysis. Residues glutamate 243, aspartate 244, and aspartate 267 each contribute to the a divalent metal cation site. NAD(+) is bound by residues aspartate 267 and asparagine 415.

The protein belongs to the malic enzymes family. Homotetramer. Mg(2+) is required as a cofactor. It depends on Mn(2+) as a cofactor.

The enzyme catalyses (S)-malate + NAD(+) = pyruvate + CO2 + NADH. It carries out the reaction oxaloacetate + H(+) = pyruvate + CO2. The sequence is that of NAD-dependent malic enzyme from Shewanella sp. (strain MR-4).